The sequence spans 1018 residues: Cell wall protein 1 (1018 aa).

The signal sequence occupies residues 1–17; it reads MLPSIVISIVLASFVSA. The CFEM 1 domain maps to 32 to 143; it reads NPYTIYPSVA…SSLSAAATAV (112 aa). 4 disulfides stabilise this stretch: cysteine 60/cysteine 100, cysteine 64/cysteine 95, cysteine 74/cysteine 81, and cysteine 83/cysteine 116. Aspartate 78 is a heme binding site. The tract at residues 147–227 is disordered; that stretch reads SEQPVETSSE…STPEDNPYTI (81 aa). Residues 148 to 164 are compositionally biased toward polar residues; that stretch reads EQPVETSSEPAGSSQSV. The span at 165–221 shows a compositional bias: low complexity; sequence ESSQPAETSSSEPAETSSSEPAETSSETSSEQPASSEPAETSSEESSTITSAPSTPE. CFEM domains lie at 223-334 and 393-504; these read NPYT…ATAV and SSSS…ATAV. Intrachain disulfides connect cysteine 251–cysteine 291, cysteine 255–cysteine 286, cysteine 265–cysteine 272, and cysteine 274–cysteine 307. Residue aspartate 269 coordinates heme. The segment at 338–396 is disordered; it reads SEQSVETSSESAESSQSVESSQPAETSSEQPSETSSETSSQQLSSITSAPDSSATSSSS. 4 disulfides stabilise this stretch: cysteine 421/cysteine 461, cysteine 425/cysteine 456, cysteine 435/cysteine 442, and cysteine 444/cysteine 477. Heme is bound at residue aspartate 439. Residues 507–557 are disordered; that stretch reads SDSASETASQEPSETSSEQPSETASQQPAETSSEESSTITSAPSTPEDNPY. Low complexity predominate over residues 509–553; it reads SASETASQEPSETSSEQPSETASQQPAETSSEESSTITSAPSTPE. A CFEM 4 domain is found at 555 to 666; the sequence is NPYTIYPSVA…SSLNAAATAV (112 aa). Disulfide bonds link cysteine 583/cysteine 623, cysteine 587/cysteine 618, cysteine 597/cysteine 604, and cysteine 606/cysteine 639. Residue aspartate 601 participates in heme binding. The segment at 677-785 is disordered; sequence SASESASQVP…STSTKSDAAS (109 aa). A compositionally biased stretch (low complexity) spans 690–766; that stretch reads SAASSQSANN…AISESVAPSS (77 aa). 9 N-linked (GlcNAc...) asparagine glycosylation sites follow: asparagine 698, asparagine 708, asparagine 718, asparagine 729, asparagine 743, asparagine 753, asparagine 769, asparagine 798, and asparagine 965. A compositionally biased stretch (polar residues) spans 767–785; sequence YGNSTIAQPSTSTKSDAAS. A lipid anchor (GPI-anchor amidated serine) is attached at serine 989. Positions 990 to 1018 are cleaved as a propeptide — removed in mature form; sequence VAIANMANTKFASTMSLLVASFVFVGLFI.

The protein belongs to the RBT5 family. The GPI-anchor is attached to the protein in the endoplasmic reticulum and serves to target the protein to the cell surface. There, the glucosamine-inositol phospholipid moiety is cleaved off and the GPI-modified mannoprotein is covalently attached via its lipidless GPI glycan remnant to the 1,6-beta-glucan of the outer cell wall layer.

It is found in the secreted. The protein localises to the cell wall. Its subcellular location is the membrane. Its function is as follows. Heme-binding protein involved in heme-iron utilization. The ability to acquire iron from host tissues is a major virulence factor of pathogenic microorganisms. Required for biofilm formation. This Candida albicans (strain SC5314 / ATCC MYA-2876) (Yeast) protein is Cell wall protein 1 (CSA1).